Here is a 616-residue protein sequence, read N- to C-terminus: MKQSKMLIPTLREMPSDAQVISHALLMRAGYVRQVSAGIYAYLPLANRVLEKLKNIMREEFDEIGAVELLAPSLLTADLWRESGRYETYGEDLYKLKNRDSSDFILGPTHEETMTSLVRDEITSYKKLPLNVYQIATKFRDEKRPRYGLLRGREFLMKDGYSYHADQDSLDETYLDYKKSYEKIFERAGLNFKPIIADAGAMGGKDSQEFIAITDDRINLEKWLVLSKNITSIDEIPESVLSEIQEELGKWLVAGEDTIVYAEGGDYAANIEMATSQFEPNVAYTEELELEKVATPGAKTIDEVSDFLEIDEEQTVKTLVYHADDELIVILLNGNDQLNEVKLTNRLGASFIEAASEAEVEEKFGAHFGSLGPIGLENVRIIADRKVELIKNAVVGANVDGYHYKNANFGRDFEVEEFVDLRTVNEGEISPDGRGTLKFARGIEIGHIFKLGTRYTEAMNANILDANGRSIPMLMGCYGIGVSRLLSAILEQFARIYVEKTPREEFKFSWSINFPKELAPFDIHLVPVNVKDEAAMELTSELEEKLRGKGYQVLVDDRNERAGVKFADSDLIGLPVRVTIGKKAAEGIVEVKIRATGEVVEINKDELVNTIEILSK.

This sequence belongs to the class-II aminoacyl-tRNA synthetase family. ProS type 1 subfamily. Homodimer.

The protein resides in the cytoplasm. It carries out the reaction tRNA(Pro) + L-proline + ATP = L-prolyl-tRNA(Pro) + AMP + diphosphate. Functionally, catalyzes the attachment of proline to tRNA(Pro) in a two-step reaction: proline is first activated by ATP to form Pro-AMP and then transferred to the acceptor end of tRNA(Pro). As ProRS can inadvertently accommodate and process non-cognate amino acids such as alanine and cysteine, to avoid such errors it has two additional distinct editing activities against alanine. One activity is designated as 'pretransfer' editing and involves the tRNA(Pro)-independent hydrolysis of activated Ala-AMP. The other activity is designated 'posttransfer' editing and involves deacylation of mischarged Ala-tRNA(Pro). The misacylated Cys-tRNA(Pro) is not edited by ProRS. This is Proline--tRNA ligase from Lactococcus lactis subsp. cremoris (strain SK11).